Consider the following 134-residue polypeptide: uncharacterized protein (134 aa).

This is an uncharacterized protein from Streptomyces coelicolor (strain ATCC BAA-471 / A3(2) / M145).